Here is a 495-residue protein sequence, read N- to C-terminus: ATP synthase subunit beta, chloroplastic (495 aa).

172 to 179 (GGAGVGKT) contacts ATP.

The protein belongs to the ATPase alpha/beta chains family. As to quaternary structure, F-type ATPases have 2 components, CF(1) - the catalytic core - and CF(0) - the membrane proton channel. CF(1) has five subunits: alpha(3), beta(3), gamma(1), delta(1), epsilon(1). CF(0) has four main subunits: a(1), b(1), b'(1) and c(9-12).

The protein resides in the plastid. It localises to the chloroplast thylakoid membrane. It carries out the reaction ATP + H2O + 4 H(+)(in) = ADP + phosphate + 5 H(+)(out). Its function is as follows. Produces ATP from ADP in the presence of a proton gradient across the membrane. The catalytic sites are hosted primarily by the beta subunits. In Hyacinthoides non-scripta (English bluebell), this protein is ATP synthase subunit beta, chloroplastic.